The chain runs to 428 residues: Trigger factor (428 aa).

In terms of domain architecture, PPIase FKBP-type spans 166-250; that stretch reads GDIVTFDFKG…IKNIKEKILP (85 aa).

Belongs to the FKBP-type PPIase family. Tig subfamily.

It is found in the cytoplasm. It carries out the reaction [protein]-peptidylproline (omega=180) = [protein]-peptidylproline (omega=0). In terms of biological role, involved in protein export. Acts as a chaperone by maintaining the newly synthesized protein in an open conformation. Functions as a peptidyl-prolyl cis-trans isomerase. The protein is Trigger factor of Mycoplasma capricolum subsp. capricolum (strain California kid / ATCC 27343 / NCTC 10154).